Here is a 286-residue protein sequence, read N- to C-terminus: Alpha-ketoglutarate-dependent dioxygenase alkB homolog 3 (286 aa).

The segment at 21 to 45 (QAIAQPATTAKSHLHQKPGQTWKNK) is disordered. A compositionally biased stretch (polar residues) spans 22–31 (AIAQPATTAK). Substrate-binding positions include Trp-115 and 141 to 143 (YTY). The 107-residue stretch at 172–278 (TFNSLLCNLY…RVNLTFRTVY (107 aa)) folds into the Fe2OG dioxygenase domain. (4R)-5-hydroxyleucine; alternate is present on Leu-177. Residue Leu-177 is modified to (4R)-5-oxoleucine; alternate. Residue 179–181 (NLY) participates in 2-oxoglutarate binding. Fe cation-binding residues include His-191 and Asp-193. Residue Asp-194 coordinates substrate. Residue His-257 participates in Fe cation binding. Residues 269-275 (RVNLTFR) and Arg-275 contribute to the 2-oxoglutarate site.

This sequence belongs to the alkB family. As to quaternary structure, interacts with the ASCC complex composed of ASCC1, ASCC2 and ASCC3. Interacts directly with ASCC3, and is thereby recruited to the ASCC complex. Interacts with OTUD4; the interaction is direct. Interacts with USP7 and USP9X. The cofactor is Fe(2+). Ubiquitinated; undergoes 'Lys-48'-linked polyubiquitination. OTUD4 promotes USP7 and USP9X-dependent deubiquitination of 'Lys-48'-polyubiquitinated ALKBH3 promoting the repair of alkylated DNA lesions. As to expression, ubiquitous. Detected in heart, pancreas, skeletal muscle, thymus, testis, ovary, spleen, prostate, small intestine, peripheral blood leukocytes, urinary bladder and colon.

The protein resides in the nucleus. It localises to the cytoplasm. It catalyses the reaction an N(1)-methyladenosine in mRNA + 2-oxoglutarate + O2 = an adenosine in mRNA + formaldehyde + succinate + CO2. The catalysed reaction is a methylated nucleobase within DNA + 2-oxoglutarate + O2 = a nucleobase within DNA + formaldehyde + succinate + CO2. It carries out the reaction an N(1)-methyl-2'-deoxyadenosine in single-stranded DNA + 2-oxoglutarate + O2 = a 2'-deoxyadenosine in single-stranded DNA + formaldehyde + succinate + CO2 + H(+). The enzyme catalyses an N(3)-methyl-2'-deoxycytidine in single-stranded DNA + 2-oxoglutarate + O2 = a 2'-deoxycytidine in single-stranded DNA + formaldehyde + succinate + CO2 + H(+). It catalyses the reaction a 3,N(4)-etheno-2'-deoxycytidine in single-stranded DNA + 2-oxoglutarate + O2 + H2O = a 2'-deoxycytidine in single-stranded DNA + glyoxal + succinate + CO2. Its activity is regulated as follows. Activated by ascorbate. In terms of biological role, dioxygenase that mediates demethylation of DNA and RNA containing 1-methyladenosine (m1A). Repairs alkylated DNA containing 1-methyladenosine (m1A) and 3-methylcytosine (m3C) by oxidative demethylation. Has a strong preference for single-stranded DNA. Able to process alkylated m3C within double-stranded regions via its interaction with ASCC3, which promotes DNA unwinding to generate single-stranded substrate needed for ALKBH3. Can repair exocyclic 3,N4-ethenocytosine adducs in single-stranded DNA. Also acts on RNA. Demethylates N(1)-methyladenosine (m1A) RNA, an epigenetic internal modification of messenger RNAs (mRNAs) highly enriched within 5'-untranslated regions (UTRs) and in the vicinity of start codons. Requires molecular oxygen, alpha-ketoglutarate and iron. This Homo sapiens (Human) protein is Alpha-ketoglutarate-dependent dioxygenase alkB homolog 3.